Reading from the N-terminus, the 459-residue chain is tRNA modification GTPase MnmE (459 aa).

The (6S)-5-formyl-5,6,7,8-tetrahydrofolate site is built by Arg-22, Glu-85, and Arg-124. Positions 221 to 380 (GLSTVIVGRP…LEIQIKDLFF (160 aa)) constitute a TrmE-type G domain. Residue Asn-231 participates in K(+) binding. GTP-binding positions include 231-236 (NVGKSS), 250-256 (TEVAGTT), and 275-278 (DTAG). Mg(2+) is bound at residue Ser-235. K(+)-binding residues include Thr-250, Val-252, and Thr-255. Thr-256 provides a ligand contact to Mg(2+). Lys-459 contacts (6S)-5-formyl-5,6,7,8-tetrahydrofolate.

It belongs to the TRAFAC class TrmE-Era-EngA-EngB-Septin-like GTPase superfamily. TrmE GTPase family. In terms of assembly, homodimer. Heterotetramer of two MnmE and two MnmG subunits. The cofactor is K(+).

The protein resides in the cytoplasm. In terms of biological role, exhibits a very high intrinsic GTPase hydrolysis rate. Involved in the addition of a carboxymethylaminomethyl (cmnm) group at the wobble position (U34) of certain tRNAs, forming tRNA-cmnm(5)s(2)U34. The sequence is that of tRNA modification GTPase MnmE from Staphylococcus epidermidis (strain ATCC 35984 / DSM 28319 / BCRC 17069 / CCUG 31568 / BM 3577 / RP62A).